We begin with the raw amino-acid sequence, 431 residues long: Pyroglutamylated RF-amide peptide receptor (431 aa).

Residues 1-46 (MQALNITPEQFSRLLRDHNLTREQFIALYRLRPLVYTPELPGRAKL) are Extracellular-facing. A glycan (N-linked (GlcNAc...) asparagine) is linked at Asn-19. A helical transmembrane segment spans residues 47–67 (ALVLTGVLIFALALFGNALVF). Residues 68-81 (YVVTRSKAMRTVTN) are Cytoplasmic-facing. A helical transmembrane segment spans residues 82-102 (IFICSLALSDLLITFFCIPVT). The Extracellular segment spans residues 103–120 (MLQNISDNWLGGAFICKM). A helical membrane pass occupies residues 121-141 (VPFVQSTAVVTEILTMTCIAV). Topologically, residues 142–162 (ERHQGLVHPFKMKWQYTNRRA) are cytoplasmic. Residues 163 to 183 (FTMLGVVWLVAVIVGSPMWHV) form a helical membrane-spanning segment. The Extracellular segment spans residues 184 to 212 (QQLEIKYDFLYEKEHICCLEEWTSPVHQK). The helical transmembrane segment at 213-233 (IYTTFILVILFLLPLMVMLIL) threads the bilayer. At 234-271 (YSKIGYELWIKKRVGDGSVLRTIHGKEMSKIARKKKRA) the chain is on the cytoplasmic side. The helical transmembrane segment at 272–292 (VIMMVTVVALFAVCWAPFHVV) threads the bilayer. Residues 293 to 311 (HMMIEYSNFEKEYDDVTIK) lie on the Extracellular side of the membrane. The helical transmembrane segment at 312–332 (MIFAIVQIIGFSNSICNPIVY) threads the bilayer. Over 333–431 (AFMNENFKKN…AENSPLDSGH (99 aa)) the chain is Cytoplasmic.

Belongs to the G-protein coupled receptor 1 family. As to expression, expressed widely in the brain with high levels in the hypothalamus, trigeminal ganglia and vestibular neurons, and moderate levels in the amygdala, cortex, pituitary, hippocampus, thalamus, caudate nucleus and medulla oblongata. In peripheral tissues, expressed at high levels in the retina and at moderate levels in the heart, kidney, testis and thyroid.

It localises to the cell membrane. Functionally, receptor for the orexigenic neuropeptide QRFP. The activity of this receptor is mediated by G proteins that modulate adenylate cyclase activity and intracellular calcium levels. This chain is Pyroglutamylated RF-amide peptide receptor (QRFPR), found in Homo sapiens (Human).